The chain runs to 226 residues: Ribose-5-phosphate isomerase A (226 aa).

Substrate-binding positions include 32–35 (TGST), 85–88 (DGAD), and 98–101 (KGGG). E107 (proton acceptor) is an active-site residue. K125 lines the substrate pocket.

It belongs to the ribose 5-phosphate isomerase family. In terms of assembly, homodimer.

The catalysed reaction is aldehydo-D-ribose 5-phosphate = D-ribulose 5-phosphate. It participates in carbohydrate degradation; pentose phosphate pathway; D-ribose 5-phosphate from D-ribulose 5-phosphate (non-oxidative stage): step 1/1. Its function is as follows. Catalyzes the reversible conversion of ribose-5-phosphate to ribulose 5-phosphate. The protein is Ribose-5-phosphate isomerase A of Saccharophagus degradans (strain 2-40 / ATCC 43961 / DSM 17024).